The following is a 622-amino-acid chain: Probable Xaa-Pro aminopeptidase P (622 aa).

4 residues coordinate Mn(2+): D419, D430, E528, and E542.

It belongs to the peptidase M24B family. Mn(2+) is required as a cofactor.

It catalyses the reaction Release of any N-terminal amino acid, including proline, that is linked to proline, even from a dipeptide or tripeptide.. Catalyzes the removal of a penultimate prolyl residue from the N-termini of peptides. The polypeptide is Probable Xaa-Pro aminopeptidase P (AMPP) (Coprinopsis cinerea (strain Okayama-7 / 130 / ATCC MYA-4618 / FGSC 9003) (Inky cap fungus)).